The following is a 415-amino-acid chain: CCA-adding enzyme (415 aa).

Residues Ser-52 and Arg-55 each contribute to the ATP site. CTP-binding residues include Ser-52 and Arg-55. Mg(2+) is bound by residues Asp-64, Asp-66, and Asp-116. ATP contacts are provided by His-139, Lys-159, and Tyr-168. CTP-binding residues include His-139, Lys-159, and Tyr-168.

Belongs to the tRNA nucleotidyltransferase/poly(A) polymerase family. Archaeal CCA-adding enzyme subfamily. In terms of assembly, homodimer. It depends on Mg(2+) as a cofactor.

The enzyme catalyses a tRNA precursor + 2 CTP + ATP = a tRNA with a 3' CCA end + 3 diphosphate. The catalysed reaction is a tRNA with a 3' CCA end + 2 CTP + ATP = a tRNA with a 3' CCACCA end + 3 diphosphate. Functionally, catalyzes the addition and repair of the essential 3'-terminal CCA sequence in tRNAs without using a nucleic acid template. Adds these three nucleotides in the order of C, C, and A to the tRNA nucleotide-73, using CTP and ATP as substrates and producing inorganic pyrophosphate. tRNA 3'-terminal CCA addition is required both for tRNA processing and repair. Also involved in tRNA surveillance by mediating tandem CCA addition to generate a CCACCA at the 3' terminus of unstable tRNAs. While stable tRNAs receive only 3'-terminal CCA, unstable tRNAs are marked with CCACCA and rapidly degraded. The polypeptide is CCA-adding enzyme (Pyrobaculum neutrophilum (strain DSM 2338 / JCM 9278 / NBRC 100436 / V24Sta) (Thermoproteus neutrophilus)).